The primary structure comprises 277 residues: Phosphonates import ATP-binding protein PhnC (277 aa).

The ABC transporter domain occupies 3–251; the sequence is IKLDKVSARH…RLQALYAQHL (249 aa). 40–47 contributes to the ATP binding site; that stretch reads GPSGAGKT.

The protein belongs to the ABC transporter superfamily. Phosphonates importer (TC 3.A.1.9.1) family. As to quaternary structure, the complex is composed of two ATP-binding proteins (PhnC), two transmembrane proteins (PhnE) and a solute-binding protein (PhnD).

The protein resides in the cell inner membrane. The catalysed reaction is phosphonate(out) + ATP + H2O = phosphonate(in) + ADP + phosphate + H(+). Its function is as follows. Part of the ABC transporter complex PhnCDE involved in phosphonates import. Responsible for energy coupling to the transport system. The sequence is that of Phosphonates import ATP-binding protein PhnC from Polaromonas sp. (strain JS666 / ATCC BAA-500).